The primary structure comprises 150 residues: SsrA-binding protein (150 aa).

Residues 130-150 form a disordered region; sequence DKRESLKEKDDRREMDRMFKR.

The protein belongs to the SmpB family.

It is found in the cytoplasm. Functionally, required for rescue of stalled ribosomes mediated by trans-translation. Binds to transfer-messenger RNA (tmRNA), required for stable association of tmRNA with ribosomes. tmRNA and SmpB together mimic tRNA shape, replacing the anticodon stem-loop with SmpB. tmRNA is encoded by the ssrA gene; the 2 termini fold to resemble tRNA(Ala) and it encodes a 'tag peptide', a short internal open reading frame. During trans-translation Ala-aminoacylated tmRNA acts like a tRNA, entering the A-site of stalled ribosomes, displacing the stalled mRNA. The ribosome then switches to translate the ORF on the tmRNA; the nascent peptide is terminated with the 'tag peptide' encoded by the tmRNA and targeted for degradation. The ribosome is freed to recommence translation, which seems to be the essential function of trans-translation. The sequence is that of SsrA-binding protein from Phocaeicola vulgatus (strain ATCC 8482 / DSM 1447 / JCM 5826 / CCUG 4940 / NBRC 14291 / NCTC 11154) (Bacteroides vulgatus).